Here is a 349-residue protein sequence, read N- to C-terminus: Glycerol-3-phosphate dehydrogenase [NAD(P)+] (349 aa).

NADPH-binding residues include S12, W13, and K107. Residues K107, G138, and S140 each contribute to the sn-glycerol 3-phosphate site. A142 provides a ligand contact to NADPH. K193, D246, S256, R257, and N258 together coordinate sn-glycerol 3-phosphate. K193 serves as the catalytic Proton acceptor. R257 provides a ligand contact to NADPH. V281 and E283 together coordinate NADPH.

This sequence belongs to the NAD-dependent glycerol-3-phosphate dehydrogenase family.

It is found in the cytoplasm. It carries out the reaction sn-glycerol 3-phosphate + NAD(+) = dihydroxyacetone phosphate + NADH + H(+). It catalyses the reaction sn-glycerol 3-phosphate + NADP(+) = dihydroxyacetone phosphate + NADPH + H(+). The protein operates within membrane lipid metabolism; glycerophospholipid metabolism. Catalyzes the reduction of the glycolytic intermediate dihydroxyacetone phosphate (DHAP) to sn-glycerol 3-phosphate (G3P), the key precursor for phospholipid synthesis. The polypeptide is Glycerol-3-phosphate dehydrogenase [NAD(P)+] (Pelotomaculum thermopropionicum (strain DSM 13744 / JCM 10971 / SI)).